The primary structure comprises 333 residues: ATP synthase subunit a (333 aa).

Positions 1–32 are cleaved as a signal peptide; that stretch reads MIYLHNKRKGMLKRLSALIVIGLLMNLPAVFA. 7 consecutive transmembrane segments (helical) span residues 100-120, 161-181, 185-205, 229-249, 254-274, 279-299, and 300-320; these read HVVM…GVGN, FMPF…IGLV, ATAT…FLVT, LMWI…PFAL, FANM…IFVF, IAPV…LVAF, and LQAY…VAHE.

This sequence belongs to the ATPase A chain family. As to quaternary structure, F-type ATPases have 2 components, CF(1) - the catalytic core - and CF(0) - the membrane proton channel. CF(1) has five subunits: alpha(3), beta(3), gamma(1), delta(1), epsilon(1). CF(0) has four main subunits: a, b, b' and c.

Its subcellular location is the cell inner membrane. Functionally, key component of the proton channel; it plays a direct role in the translocation of protons across the membrane. In Chloroherpeton thalassium (strain ATCC 35110 / GB-78), this protein is ATP synthase subunit a.